The primary structure comprises 248 residues: 5'-nucleotidase SurE (248 aa).

Asp8, Asp9, Ser39, and Asn91 together coordinate a divalent metal cation.

This sequence belongs to the SurE nucleotidase family. A divalent metal cation serves as cofactor.

It localises to the cytoplasm. The catalysed reaction is a ribonucleoside 5'-phosphate + H2O = a ribonucleoside + phosphate. In terms of biological role, nucleotidase that shows phosphatase activity on nucleoside 5'-monophosphates. This is 5'-nucleotidase SurE from Neisseria meningitidis serogroup C (strain 053442).